The primary structure comprises 329 residues: Gamma-resorcylate decarboxylase (329 aa).

Residues Glu8, His10, His167, and Asp290 each coordinate Zn(2+). Residue Asp290 is part of the active site.

This sequence belongs to the metallo-dependent hydrolases superfamily. ACMSD family. Zn(2+) serves as cofactor.

The catalysed reaction is 2,6-dihydroxybenzoate + H(+) = resorcinol + CO2. Its pathway is aromatic compound metabolism. Its function is as follows. Involved in the gamma-resorcylate (2,6-dihydroxybenzoate) catabolism. Catalyzes the reversible decarboxylation of gamma-resorcylate to resorcinol. This is Gamma-resorcylate decarboxylase from Rhodococcus jostii (strain RHA1).